Consider the following 157-residue polypeptide: MRIGHGYDVHRFAEGDFITLGGVRIAHGFGLLAHSDGDVLLHALSDALLGAAALGDIGKHFPDTDPQFKGADSRVLLRHVVSLIHAKGWKVGNVDNTIVAQAPKMAPHIESMRALIAADLQVELDQVNVKATTTEKLGFVGREEGIAVHSVALLLRA.

A divalent metal cation contacts are provided by aspartate 8 and histidine 10. 4-CDP-2-C-methyl-D-erythritol 2-phosphate-binding positions include 8-10 (DVH) and 34-35 (HS). Histidine 42 contacts a divalent metal cation. 4-CDP-2-C-methyl-D-erythritol 2-phosphate is bound by residues 56 to 58 (DIG), 61 to 65 (FPDTD), 100 to 106 (AQAPKMA), 132 to 135 (TTTE), phenylalanine 139, and arginine 142.

It belongs to the IspF family. Homotrimer. Requires a divalent metal cation as cofactor.

The enzyme catalyses 4-CDP-2-C-methyl-D-erythritol 2-phosphate = 2-C-methyl-D-erythritol 2,4-cyclic diphosphate + CMP. It functions in the pathway isoprenoid biosynthesis; isopentenyl diphosphate biosynthesis via DXP pathway; isopentenyl diphosphate from 1-deoxy-D-xylulose 5-phosphate: step 4/6. Functionally, involved in the biosynthesis of isopentenyl diphosphate (IPP) and dimethylallyl diphosphate (DMAPP), two major building blocks of isoprenoid compounds. Catalyzes the conversion of 4-diphosphocytidyl-2-C-methyl-D-erythritol 2-phosphate (CDP-ME2P) to 2-C-methyl-D-erythritol 2,4-cyclodiphosphate (ME-CPP) with a corresponding release of cytidine 5-monophosphate (CMP). The protein is 2-C-methyl-D-erythritol 2,4-cyclodiphosphate synthase of Pseudomonas fluorescens (strain Pf0-1).